Reading from the N-terminus, the 255-residue chain is Ribonuclease HII (255 aa).

An RNase H type-2 domain is found at 70–255; the sequence is EYIAGVDEVG…FEPVKKILLK (186 aa). 3 residues coordinate a divalent metal cation: Asp76, Glu77, and Asp168.

This sequence belongs to the RNase HII family. The cofactor is Mn(2+). Requires Mg(2+) as cofactor.

It localises to the cytoplasm. It catalyses the reaction Endonucleolytic cleavage to 5'-phosphomonoester.. In terms of biological role, endonuclease that specifically degrades the RNA of RNA-DNA hybrids. The polypeptide is Ribonuclease HII (Ligilactobacillus salivarius (strain UCC118) (Lactobacillus salivarius)).